The sequence spans 212 residues: Entry-fusion complex associated protein OPG083 (212 aa).

The Virion surface segment spans residues 1–175; the sequence is MAETKEFKTL…IIENRLPYYD (175 aa). 3 disulfides stabilise this stretch: Cys33–Cys55, Cys47–Cys127, and Cys107–Cys149. A helical transmembrane segment spans residues 176–196; sequence PWFLVGVAIILVIFTVAICSI. The Intravirion segment spans residues 197 to 212; sequence RRNLALKYRYGTFLYV.

This sequence belongs to the orthopoxvirus OPG053 family. In terms of assembly, component of the entry fusion complex (EFC) composed of OPG053/F9, OPG076/O3, OPG086/G3, OPG094/G9, OPG095/L1, OPG099/L5, OPG107/H2, OPG143/A16, OPG104/J5, OPG147/A21 and OPG155/A28. Except for OPG095/L1 and OPG052/F9, each of the EFC proteins is required for assembly or stability of the complex. Post-translationally, disulfid bonds are oxidized in the cytoplasm by OPG088 protein. Unglycosylated because produced in viral factories instead of the classic ER -Golgi route.

Its subcellular location is the virion membrane. Functionally, component of the entry fusion complex (EFC), which consists of 11 proteins. During cell infection, this complex mediates entry of the virion core into the host cytoplasm by a two-step mechanism consisting of lipid mixing of the viral and cellular membranes and subsequent pore formation. The polypeptide is Entry-fusion complex associated protein OPG083 (OPG053) (Vaccinia virus (strain Western Reserve) (VACV)).